We begin with the raw amino-acid sequence, 470 residues long: mRNA export factor ICP27 homolog (470 aa).

Disordered stretches follow at residues 1 to 31 (MALS…TGGD) and 73 to 202 (FSAS…AGDR). Over residues 73–85 (FSASPQRAQPSNP) the composition is skewed to polar residues. 2 stretches are compositionally biased toward basic residues: residues 94–107 (HGRR…RRNN) and 178–187 (RVHRNRRRGN). Residues cysteine 359, histidine 437, cysteine 441, and cysteine 446 each contribute to the Zn(2+) site. A CHC2-type zinc finger spans residues 359 to 446 (CYLSSSGSPT…HKRRCKADTC (88 aa)).

This sequence belongs to the HHV-1 ICP27 protein family. In terms of assembly, homodimer. Homodimerization is required for transactivation. Associates in a complex with RNA, and host export factors NXF1/TAP and ALYREF; these interactions allow nuclear export of viral transcripts. Interacts with three host shuttling SR proteins SRSF1, SRSF3 and SRSF7. Interacts with host SRPK1. Interacts with IE62; this interaction enhances IE62 transactivation.

It is found in the host cytoplasm. The protein localises to the host nucleus. Its function is as follows. Multifunctional regulator of the expression of viral genes that mediates nuclear export of viral intronless mRNAs. This immediate early (EI) protein promotes the nuclear export of viral intronless mRNAs by interacting with mRNAs and host NXF1/TAP. The sequence is that of mRNA export factor ICP27 homolog from Equine herpesvirus 1 (strain Kentucky A) (EHV-1).